A 373-amino-acid polypeptide reads, in one-letter code: 2-aminoethylphosphonate--pyruvate transaminase (373 aa).

Lys-191 is modified (N6-(pyridoxal phosphate)lysine).

The protein belongs to the class-V pyridoxal-phosphate-dependent aminotransferase family. PhnW subfamily. In terms of assembly, homodimer. Requires pyridoxal 5'-phosphate as cofactor.

It catalyses the reaction (2-aminoethyl)phosphonate + pyruvate = phosphonoacetaldehyde + L-alanine. Involved in phosphonate degradation. This chain is 2-aminoethylphosphonate--pyruvate transaminase, found in Burkholderia ambifaria (strain MC40-6).